A 111-amino-acid polypeptide reads, in one-letter code: Regulator of ribonuclease activity B (111 aa).

It belongs to the RraB family. As to quaternary structure, interacts with the C-terminal region of Rne.

It localises to the cytoplasm. In terms of biological role, globally modulates RNA abundance by binding to RNase E (Rne) and regulating its endonucleolytic activity. Can modulate Rne action in a substrate-dependent manner by altering the composition of the degradosome. This is Regulator of ribonuclease activity B from Pseudoalteromonas translucida (strain TAC 125).